Here is a 400-residue protein sequence, read N- to C-terminus: 1-deoxy-D-xylulose 5-phosphate reductoisomerase (400 aa).

NADPH is bound by residues Thr10, Gly11, Ser12, Ile13, Gly36, Asn38, and Asn124. Lys125 contributes to the 1-deoxy-D-xylulose 5-phosphate binding site. Glu126 is an NADPH binding site. Asp150 contributes to the Mn(2+) binding site. 4 residues coordinate 1-deoxy-D-xylulose 5-phosphate: Ser151, Glu152, Ser186, and His209. A Mn(2+)-binding site is contributed by Glu152. Gly215 is a binding site for NADPH. 4 residues coordinate 1-deoxy-D-xylulose 5-phosphate: Ser222, Asn227, Lys228, and Glu231. Glu231 is a Mn(2+) binding site.

This sequence belongs to the DXR family. Requires Mg(2+) as cofactor. The cofactor is Mn(2+).

The enzyme catalyses 2-C-methyl-D-erythritol 4-phosphate + NADP(+) = 1-deoxy-D-xylulose 5-phosphate + NADPH + H(+). Its pathway is isoprenoid biosynthesis; isopentenyl diphosphate biosynthesis via DXP pathway; isopentenyl diphosphate from 1-deoxy-D-xylulose 5-phosphate: step 1/6. Catalyzes the NADPH-dependent rearrangement and reduction of 1-deoxy-D-xylulose-5-phosphate (DXP) to 2-C-methyl-D-erythritol 4-phosphate (MEP). This is 1-deoxy-D-xylulose 5-phosphate reductoisomerase from Aliivibrio fischeri (strain ATCC 700601 / ES114) (Vibrio fischeri).